We begin with the raw amino-acid sequence, 418 residues long: MKYSAPIRLNALSAIVSHHGVLVVIGMLLAVPMAFPLFPIAATYCAAILAILLPLGRLQHVLATASSIAFAWLLTLRNPSRGLVEAGLGDDALHYMNAFYEFQQNYCCSPLDVLKTGIRSAGGGEPIFWYLSYGVAKLFDTPLMVWAILIFISLMLVWIAIYRSTERFAYVVFVAYLSTITLYALQGSAIRQAVAVGLVMVALDLLIRRRLVWAACVGLLAAGTHSSAAALLLVCATVMLFLSKDYGMLARKASWLGQLGRLLVLLVLAVAAVAFGSAEFVMSKIQARLSENQTGSAWEFQLAVEAVLACLFAWLFRMKLPREEKLTYFLFVLLCASTSFFAPAVGARLFRYTYCFYIVYLCVFFFAREGESLGQKKTLASLLFLASLGWAFYIVDVRYQGLFVSGGVIDHFLAGPFF.

The next 10 helical transmembrane spans lie at 21 to 41 (VLVV…FPIA), 45 to 65 (CAAI…LATA), 142 to 162 (PLMV…IAIY), 170 to 190 (YVVF…GSAI), 222 to 242 (AGTH…MLFL), 262 to 282 (LLVL…EFVM), 296 to 316 (SAWE…AWLF), 326 to 346 (LTYF…PAVG), 347 to 367 (ARLF…FFFA), and 377 to 397 (KTLA…IVDV).

To S.marcescens SfuB.

The protein localises to the cell inner membrane. Its function is as follows. Probably involved in polymerization and/or export of exopolysaccharide EPS I which functions as a virulence factor. May play a role in export of EPS I or its intermediates across the membranes. The sequence is that of EPS I polysaccharide export inner membrane protein EpsF (epsF) from Ralstonia solanacearum (Pseudomonas solanacearum).